The following is a 204-amino-acid chain: Large ribosomal subunit protein uL13 (204 aa).

This sequence belongs to the universal ribosomal protein uL13 family.

This is Large ribosomal subunit protein uL13 (RpL13A) from Choristoneura parallela (Spotted fireworm moth).